We begin with the raw amino-acid sequence, 392 residues long: Vascular endothelial growth factor A, long form (392 aa).

Disordered stretches follow at residues 1–44 (MTDR…VEGV) and 73–174 (DKPI…GPGR). The span at 89 to 104 (PGPEKRGEEEKEEERG) shows a compositional bias: basic and acidic residues. 2 stretches are compositionally biased toward low complexity: residues 121 to 143 (AAVCADSAPAARAPQAPARASVP) and 158 to 174 (PRSPSRRGSASRAGPGR). Cystine bridges form between Cys229-Cys271, Cys260-Cys305, and Cys264-Cys307. The N-linked (GlcNAc...) asparagine glycan is linked to Asn278. The segment covering 309–320 (PKKDRTKPEKKS) has biased composition (basic and acidic residues). The segment at 309-337 (PKKDRTKPEKKSVRGKGKGQKRKRKKSRF) is disordered. Residues 321–337 (VRGKGKGQKRKRKKSRF) are compositionally biased toward basic residues.

It belongs to the PDGF/VEGF growth factor family. In terms of assembly, homodimer; disulfide-linked. Also found as heterodimer with PGF. Interacts with NRP1. Interacts with isoform 2 of BSG. Interacts with CD82; this interaction inhibits VEGFA-mediated signaling pathway. Post-translationally, produced by use of an alternative upstream CUG codon and post-translationally processed into the N-terminal N-VEGF form and the C-terminal secreted VEGFA form. In developing embryos, expressed mainly in the choroid plexus, paraventricular neuroepithelium, placenta and kidney glomeruli. Also found in bronchial epithelium, adrenal gland and in seminiferous tubules of testis. High expression continues in kidney glomeruli and choroid plexus in adults.

The protein localises to the cytoplasm. The protein resides in the nucleus. It is found in the secreted. It localises to the endoplasmic reticulum. Its subcellular location is the golgi apparatus. The protein localises to the extracellular space. The protein resides in the extracellular matrix. It is found in the cell membrane. In terms of biological role, participates in the induction of key genes involved in the response to hypoxia and in the induction of angiogenesis such as HIF1A. Involved in protecting cells from hypoxia-mediated cell death. Growth factor active in angiogenesis, vasculogenesis and endothelial cell growth. Induces endothelial cell proliferation, promotes cell migration, inhibits apoptosis and induces permeabilization of blood vessels. Binds to the FLT1/VEGFR1 and KDR/VEGFR2 receptors, heparan sulfate and heparin. Binds to the NRP1/neuropilin-1 receptor. Binding to NRP1 receptor initiates a signaling pathway needed for motor neuron axon guidance and cell body migration, including for the caudal migration of facial motor neurons from rhombomere 4 to rhombomere 6 during embryonic development. Also binds the DEAR/FBXW7-AS1 receptor. May play a role in increasing vascular permeability during lactation, when increased transport of molecules from the blood is required for efficient milk protein synthesis. The chain is Vascular endothelial growth factor A, long form (Vegfa) from Mus musculus (Mouse).